Here is a 430-residue protein sequence, read N- to C-terminus: tRNA(Ile)-lysidine synthase (430 aa).

24–29 (SGGLDS) contributes to the ATP binding site.

It belongs to the tRNA(Ile)-lysidine synthase family.

The protein resides in the cytoplasm. The catalysed reaction is cytidine(34) in tRNA(Ile2) + L-lysine + ATP = lysidine(34) in tRNA(Ile2) + AMP + diphosphate + H(+). In terms of biological role, ligates lysine onto the cytidine present at position 34 of the AUA codon-specific tRNA(Ile) that contains the anticodon CAU, in an ATP-dependent manner. Cytidine is converted to lysidine, thus changing the amino acid specificity of the tRNA from methionine to isoleucine. The sequence is that of tRNA(Ile)-lysidine synthase from Haemophilus influenzae (strain ATCC 51907 / DSM 11121 / KW20 / Rd).